Here is a 114-residue protein sequence, read N- to C-terminus: Photosystem II reaction center Psb28 protein (114 aa).

This sequence belongs to the Psb28 family. Part of the photosystem II complex.

The protein localises to the plastid. It is found in the chloroplast thylakoid membrane. In Thalassiosira pseudonana (Marine diatom), this protein is Photosystem II reaction center Psb28 protein.